The primary structure comprises 369 residues: Glutamate 5-kinase (369 aa).

K8 contacts ATP. Substrate contacts are provided by S49, D136, and N148. ATP contacts are provided by residues 168 to 169 (TD) and 211 to 217 (TGGMATK). Positions 276 to 354 (TGKLYLDSGA…DEISQILGYG (79 aa)) constitute a PUA domain.

It belongs to the glutamate 5-kinase family.

Its subcellular location is the cytoplasm. It carries out the reaction L-glutamate + ATP = L-glutamyl 5-phosphate + ADP. The protein operates within amino-acid biosynthesis; L-proline biosynthesis; L-glutamate 5-semialdehyde from L-glutamate: step 1/2. In terms of biological role, catalyzes the transfer of a phosphate group to glutamate to form L-glutamate 5-phosphate. The polypeptide is Glutamate 5-kinase (Rippkaea orientalis (strain PCC 8801 / RF-1) (Cyanothece sp. (strain PCC 8801))).